The sequence spans 892 residues: Alanine--tRNA ligase (892 aa).

4 residues coordinate Zn(2+): histidine 594, histidine 598, cysteine 702, and histidine 706.

The protein belongs to the class-II aminoacyl-tRNA synthetase family. Zn(2+) serves as cofactor.

Its subcellular location is the cytoplasm. The catalysed reaction is tRNA(Ala) + L-alanine + ATP = L-alanyl-tRNA(Ala) + AMP + diphosphate. Catalyzes the attachment of alanine to tRNA(Ala) in a two-step reaction: alanine is first activated by ATP to form Ala-AMP and then transferred to the acceptor end of tRNA(Ala). Also edits incorrectly charged Ser-tRNA(Ala) and Gly-tRNA(Ala) via its editing domain. This is Alanine--tRNA ligase from Pyrobaculum aerophilum (strain ATCC 51768 / DSM 7523 / JCM 9630 / CIP 104966 / NBRC 100827 / IM2).